Consider the following 490-residue polypeptide: GTPase Der (490 aa).

2 consecutive EngA-type G domains span residues P3–L166 and I203–T376. GTP is bound by residues G9–S16, D56–I60, N118–D121, G209–S216, D256–V260, and N321–D324. A KH-like domain is found at R377–E461.

The protein belongs to the TRAFAC class TrmE-Era-EngA-EngB-Septin-like GTPase superfamily. EngA (Der) GTPase family. Associates with the 50S ribosomal subunit.

Functionally, GTPase that plays an essential role in the late steps of ribosome biogenesis. The protein is GTPase Der of Shigella boydii serotype 18 (strain CDC 3083-94 / BS512).